Consider the following 362-residue polypeptide: Protein-glutamate methylesterase/protein-glutamine glutaminase (362 aa).

In terms of domain architecture, Response regulatory spans 10–127; sequence RVLVVDDSAF…SLNMHVARDE (118 aa). Aspartate 61 bears the 4-aspartylphosphate mark. Residues 173–362 enclose the CheB-type methylesterase domain; it reads RLPRRLVLIG…DAITRAVGEG (190 aa). Residues serine 184, histidine 211, and aspartate 304 contribute to the active site.

The protein belongs to the CheB family. Phosphorylated by CheA. Phosphorylation of the N-terminal regulatory domain activates the methylesterase activity.

The protein localises to the cytoplasm. The catalysed reaction is [protein]-L-glutamate 5-O-methyl ester + H2O = L-glutamyl-[protein] + methanol + H(+). The enzyme catalyses L-glutaminyl-[protein] + H2O = L-glutamyl-[protein] + NH4(+). Involved in chemotaxis. Part of a chemotaxis signal transduction system that modulates chemotaxis in response to various stimuli. Catalyzes the demethylation of specific methylglutamate residues introduced into the chemoreceptors (methyl-accepting chemotaxis proteins or MCP) by CheR. Also mediates the irreversible deamidation of specific glutamine residues to glutamic acid. This is Protein-glutamate methylesterase/protein-glutamine glutaminase from Symbiobacterium thermophilum (strain DSM 24528 / JCM 14929 / IAM 14863 / T).